We begin with the raw amino-acid sequence, 148 residues long: Glutamyl-tRNA(Gln) amidotransferase subunit C, mitochondrial (148 aa).

Belongs to the GatC family. In terms of assembly, subunit of the heterotrimeric GatCAB amidotransferase (AdT) complex, composed of A, B and C subunits.

It localises to the mitochondrion. The catalysed reaction is L-glutamyl-tRNA(Gln) + L-glutamine + ATP + H2O = L-glutaminyl-tRNA(Gln) + L-glutamate + ADP + phosphate + H(+). Its function is as follows. Allows the formation of correctly charged Gln-tRNA(Gln) through the transamidation of misacylated Glu-tRNA(Gln) in the mitochondria. The reaction takes place in the presence of glutamine and ATP through an activated gamma-phospho-Glu-tRNA(Gln). The polypeptide is Glutamyl-tRNA(Gln) amidotransferase subunit C, mitochondrial (Drosophila pseudoobscura pseudoobscura (Fruit fly)).